We begin with the raw amino-acid sequence, 245 residues long: MVEYYDVLGVQRNSSPDDIKKAYRRLALKWHPDKNPDNKEEAERRFKEVAEAYEVLSDSKKRDIYDKYGKEGLAGGGGGGGSHYDVPFQFGFTFRSPDDVFREFFGGRDPFSFDLFAEDPFDDFFGRRGHRGNRSRPGGGSFLSTFGGFPAFGPSFSPFDSGFSSSFGSFGGHGGFTSFSSSSFGGSGMGNVRSVSTSTKIVNGRRVTTKRIVENGQERVEVEEDGQLKSLTINGKEQLLRLDNK.

Residues 3–69 enclose the J domain; that stretch reads EYYDVLGVQR…KKRDIYDKYG (67 aa).

As to quaternary structure, homooligomer.

It is found in the cytoplasm. Its subcellular location is the perinuclear region. It localises to the nucleus. Its function is as follows. Has a stimulatory effect on the ATPase activity of HSP70 in a dose-dependent and time-dependent manner and hence acts as a co-chaperone of HSP70. Plays an indispensable role in the organization of KRT8/KRT18 filaments. Acts as an endogenous molecular chaperone for neuronal proteins including huntingtin. Suppresses aggregation and toxicity of polyglutamine-containing, aggregation-prone proteins. Also reduces cellular toxicity and caspase-3 activity. The protein is DnaJ homolog subfamily B member 6-B (dnajb6-b) of Xenopus laevis (African clawed frog).